The primary structure comprises 227 residues: Orotidine 5'-phosphate decarboxylase (227 aa).

Substrate-binding positions include D8, K30, 58 to 67, T117, R177, Q186, G206, and R207; that span reads DLKVHDIPNT. Residue K60 is the Proton donor of the active site.

This sequence belongs to the OMP decarboxylase family. Type 1 subfamily. Homodimer.

The catalysed reaction is orotidine 5'-phosphate + H(+) = UMP + CO2. It functions in the pathway pyrimidine metabolism; UMP biosynthesis via de novo pathway; UMP from orotate: step 2/2. Catalyzes the decarboxylation of orotidine 5'-monophosphate (OMP) to uridine 5'-monophosphate (UMP). This Campylobacter fetus subsp. fetus (strain 82-40) protein is Orotidine 5'-phosphate decarboxylase.